A 159-amino-acid chain; its full sequence is MKITILSVGKLKEKYWKQAIAEYEKRLGPYTKIELIEVPDEKAPENMSDKEIEQVKEKEGQRLLNKIKPQSTVITLEIKGKMLSSEGLAKELQTRMTQGQSDFTFVIGGSNGLHQDVLQRSNYALSFSNMTFPHQMMRVILIEQIYRAFKIMRGEAYHK.

S-adenosyl-L-methionine-binding positions include L76, G108, and 127 to 132 (FSNMTF).

The protein belongs to the RNA methyltransferase RlmH family. Homodimer.

Its subcellular location is the cytoplasm. It catalyses the reaction pseudouridine(1915) in 23S rRNA + S-adenosyl-L-methionine = N(3)-methylpseudouridine(1915) in 23S rRNA + S-adenosyl-L-homocysteine + H(+). Functionally, specifically methylates the pseudouridine at position 1915 (m3Psi1915) in 23S rRNA. The chain is Ribosomal RNA large subunit methyltransferase H from Staphylococcus epidermidis (strain ATCC 35984 / DSM 28319 / BCRC 17069 / CCUG 31568 / BM 3577 / RP62A).